We begin with the raw amino-acid sequence, 194 residues long: Chorion class B protein ERB4 (194 aa).

The signal sequence occupies residues 1-20 (MSSNVIVLCVSALFIQCAVS). The left arm stretch occupies residues 22–72 (CVGRIGSLRGGPFDGWGYDGLGYDGFGIGGWNGRGCGGLGDDIAAAAALGA). Residues 73–128 (SHGGTLAVVSTSAAPTGLGIASENVYEGSVGVCGNLPFLGTADVAGEFPTAGLGGI) are central domain. The right arm (Gly-rich tandem repeats) stretch occupies residues 129 to 194 (DYTCGDGAVG…RGCGCGANYY (66 aa)).

Belongs to the chorion protein family.

Functionally, this protein is one of many from the eggshell of the silk moth. The chain is Chorion class B protein ERB4 from Bombyx mori (Silk moth).